We begin with the raw amino-acid sequence, 150 residues long: Small ribosomal subunit protein uS11z (150 aa).

Ser-19 carries the post-translational modification Phosphoserine.

It belongs to the universal ribosomal protein uS11 family. In terms of assembly, interacts with AAK6.

The protein localises to the cytoplasm. This Arabidopsis thaliana (Mouse-ear cress) protein is Small ribosomal subunit protein uS11z (RPS14A).